The following is a 119-amino-acid chain: Large ribosomal subunit protein bL20 (119 aa).

The protein belongs to the bacterial ribosomal protein bL20 family.

Functionally, binds directly to 23S ribosomal RNA and is necessary for the in vitro assembly process of the 50S ribosomal subunit. It is not involved in the protein synthesizing functions of that subunit. This Gluconacetobacter diazotrophicus (strain ATCC 49037 / DSM 5601 / CCUG 37298 / CIP 103539 / LMG 7603 / PAl5) protein is Large ribosomal subunit protein bL20.